The following is a 204-amino-acid chain: DNA-directed RNA polymerase III subunit RPC8 (204 aa).

A disordered region spans residues 158 to 178 (VDTSPTGPSSAEAASSSEELP). Residues 166–175 (SSAEAASSSE) are compositionally biased toward low complexity.

The protein belongs to the eukaryotic RPB7/RPC8 RNA polymerase subunit family. As to quaternary structure, component of the RNA polymerase III complex consisting of 17 subunits: a ten-subunit horseshoe-shaped catalytic core composed of POLR3A/RPC1, POLR3B/RPC2, POLR1C/RPAC1, POLR1D/RPAC2, POLR3K/RPC10, POLR2E/RPABC1, POLR2F/RPABC2, POLR2H/RPABC3, POLR2K/RPABC4 and POLR2L/RPABC5; a mobile stalk composed of two subunits POLR3H/RPC8 and CRCP/RPC9, protruding from the core and functioning primarily in transcription initiation; and additional subunits homologous to general transcription factors of the RNA polymerase II machinery, POLR3C/RPC3-POLR3F/RPC6-POLR3G/RPC7 heterotrimer required for transcription initiation and POLR3D/RPC4-POLR3E/RPC5 heterodimer involved in both transcription initiation and termination. Interacts with CRCP/RPC9. POLR3H/RPC8 and CRCP/RPC9 probably form a Pol III subcomplex.

The protein resides in the nucleus. In terms of biological role, DNA-dependent RNA polymerase catalyzes the transcription of DNA into RNA using the four ribonucleoside triphosphates as substrates. Specific peripheric component of RNA polymerase III (Pol III) which synthesizes small non-coding RNAs including 5S rRNA, snRNAs, tRNAs and miRNAs from at least 500 distinct genomic loci. With CRCP/RPC9 forms a mobile stalk that protrudes from Pol III core and functions primarily in transcription initiation. Pol III plays a key role in sensing and limiting infection by intracellular bacteria and DNA viruses. Acts as nuclear and cytosolic DNA sensor involved in innate immune response. Can sense non-self dsDNA that serves as template for transcription into dsRNA. The non-self RNA polymerase III transcripts, such as Epstein-Barr virus-encoded RNAs (EBERs) induce type I interferon and NF-kappa-B through the RIG-I pathway. This chain is DNA-directed RNA polymerase III subunit RPC8 (POLR3H), found in Bos taurus (Bovine).